A 52-amino-acid chain; its full sequence is Conotoxin Cal6.36 (52 aa).

The first 22 residues, 1–22, serve as a signal peptide directing secretion; it reads MKVTCVLTLAVLILTVGQMVTA. 3 disulfides stabilise this stretch: Cys-24–Cys-39, Cys-31–Cys-43, and Cys-38–Cys-47.

In terms of tissue distribution, expressed by the venom duct.

It is found in the secreted. Functionally, probable neurotoxin. The protein is Conotoxin Cal6.36 of Californiconus californicus (California cone).